The chain runs to 356 residues: cGAMP-activated phospholipase (356 aa).

The PNPLA domain occupies 15–206 (LSLNGGGARG…VANNPSYIGL (192 aa)). Positions 19-24 (GGGARG) match the GXGXXG motif. The short motif at 58–62 (GTSIG) is the GXSXG element. Ser-60 functions as the Nucleophile in the catalytic mechanism. The active-site Proton acceptor is the Asp-193. The DGA/G motif lies at 193–195 (DGG).

The protein belongs to the patatin family.

It catalyses the reaction a 1,2-diacyl-sn-glycero-3-phosphocholine + H2O = a 2-acyl-sn-glycero-3-phosphocholine + a fatty acid + H(+). The enzyme catalyses 1,2-di-(9Z-octadecenoyl)-sn-glycero-3-phosphoethanolamine + 2 H2O = sn-glycero-3-phosphoethanolamine + 2 (9Z)-octadecenoate + 2 H(+). Phospholipase activity is specifically activated upon 3',3'-cGAMP binding, which is produced by the cognate cyclic nucleotide synthase encoded in the same operon. Its function is as follows. Effector phospholipase of a CBASS antiviral system. CBASS (cyclic oligonucleotide-based antiphage signaling system) provides immunity against bacteriophages. The CD-NTase protein (DncV) synthesizes cyclic nucleotides in response to infection; these serve as specific second messenger signals. The signals activate a diverse range of effectors, leading to bacterial cell death and thus abortive phage infection. A type II-A(GA) CBASS system. In terms of biological role, phospholipase that is activated upon binding to the cyclic dinucleotide (CDN) second messenger 3',3'-cyclic GMP-AMP (cGAMP). Degrades phospholipids in the cell membrane. Protects E.coli against phage infection. When capV and dncV are introduced in E.coli MG1655 there is 1000-fold protection against phage P1; protection against other phage (T2, T4, T5, T6 and lambda-vir) requires the 2 subsequent genes (cap2 and cap3). Upon P1 phage infection the activating molecule is produced between 30 and 40 minutes. Activation leads to bacterial cell lysis and death, which occurs before the phage has finished its replication cycle, thus protecting non-infected bacteria by aborting the phage infection and preventing its propagation. In another paper the capV-dncV-cap2-cap3 operon gives 10(4)-10(5)-fold protection against phages lambda, T2, T4 and T6, about 1000-fold protection against P1 and 10-fold protection against T5. This Escherichia coli (strain TW11681) protein is cGAMP-activated phospholipase.